The following is a 420-amino-acid chain: L-rhamnose isomerase (420 aa).

Mn(2+) contacts are provided by H262, D294, and D296.

This sequence belongs to the rhamnose isomerase family. As to quaternary structure, homotetramer. Mn(2+) is required as a cofactor.

The protein localises to the cytoplasm. It catalyses the reaction L-rhamnopyranose = L-rhamnulose. It participates in carbohydrate degradation; L-rhamnose degradation; glycerone phosphate from L-rhamnose: step 1/3. Its function is as follows. Catalyzes the interconversion of L-rhamnose and L-rhamnulose. In Pectobacterium atrosepticum (strain SCRI 1043 / ATCC BAA-672) (Erwinia carotovora subsp. atroseptica), this protein is L-rhamnose isomerase.